Reading from the N-terminus, the 231-residue chain is 7-cyano-7-deazaguanine synthase (231 aa).

8 to 18 provides a ligand contact to ATP; that stretch reads FSGGQDSTTCL. Residues C188, C197, C200, and C203 each contribute to the Zn(2+) site.

It belongs to the QueC family. Zn(2+) serves as cofactor.

The catalysed reaction is 7-carboxy-7-deazaguanine + NH4(+) + ATP = 7-cyano-7-deazaguanine + ADP + phosphate + H2O + H(+). Its pathway is purine metabolism; 7-cyano-7-deazaguanine biosynthesis. Functionally, catalyzes the ATP-dependent conversion of 7-carboxy-7-deazaguanine (CDG) to 7-cyano-7-deazaguanine (preQ(0)). This is 7-cyano-7-deazaguanine synthase from Salmonella schwarzengrund (strain CVM19633).